The primary structure comprises 466 residues: UDP-N-acetylmuramoylalanine--D-glutamate ligase (466 aa).

ATP is bound at residue 124-130 (GSDGKTT).

The protein belongs to the MurCDEF family.

The protein resides in the cytoplasm. It catalyses the reaction UDP-N-acetyl-alpha-D-muramoyl-L-alanine + D-glutamate + ATP = UDP-N-acetyl-alpha-D-muramoyl-L-alanyl-D-glutamate + ADP + phosphate + H(+). The protein operates within cell wall biogenesis; peptidoglycan biosynthesis. Functionally, cell wall formation. Catalyzes the addition of glutamate to the nucleotide precursor UDP-N-acetylmuramoyl-L-alanine (UMA). This is UDP-N-acetylmuramoylalanine--D-glutamate ligase from Acetivibrio thermocellus (strain ATCC 27405 / DSM 1237 / JCM 9322 / NBRC 103400 / NCIMB 10682 / NRRL B-4536 / VPI 7372) (Clostridium thermocellum).